A 199-amino-acid chain; its full sequence is UPF0637 protein LVIS_1261 (199 aa).

The protein belongs to the UPF0637 family.

The sequence is that of UPF0637 protein LVIS_1261 from Levilactobacillus brevis (strain ATCC 367 / BCRC 12310 / CIP 105137 / JCM 1170 / LMG 11437 / NCIMB 947 / NCTC 947) (Lactobacillus brevis).